A 62-amino-acid polypeptide reads, in one-letter code: Potassium channel toxin alpha-KTx Tx773 (62 aa).

The signal sequence occupies residues 1–18 (MQKLFIVLLLFCILRLDA). 3 cysteine pairs are disulfide-bonded: Cys-28–Cys-46, Cys-33–Cys-59, and Cys-37–Cys-61.

It belongs to the short scorpion toxin superfamily. Potassium channel inhibitor family. Alpha-KTx 23 subfamily. In terms of tissue distribution, expressed by the venom gland.

Its subcellular location is the secreted. In terms of biological role, may block potassium channels. The chain is Potassium channel toxin alpha-KTx Tx773 from Buthus israelis (Israeli scorpion).